The following is a 432-amino-acid chain: uncharacterized protein (432 aa).

This is an uncharacterized protein from Methanocaldococcus jannaschii (strain ATCC 43067 / DSM 2661 / JAL-1 / JCM 10045 / NBRC 100440) (Methanococcus jannaschii).